The following is a 340-amino-acid chain: Very-long-chain 3-oxoacyl-CoA reductase (340 aa).

The chain crosses the membrane as a helical span at residues 23–43; sequence LQYTFAALGALYVLRGALSFV. Positions 68, 109, 123, 131, 150, 185, 217, 221, 250, and 252 each coordinate NADP(+). Y217 acts as the Proton donor in catalysis. K221 serves as the catalytic Lowers pKa of active site Tyr.

This sequence belongs to the short-chain dehydrogenases/reductases (SDR) family.

The protein localises to the endoplasmic reticulum membrane. It carries out the reaction a very-long-chain (3R)-3-hydroxyacyl-CoA + NADP(+) = a very-long-chain 3-oxoacyl-CoA + NADPH + H(+). It functions in the pathway lipid metabolism; fatty acid biosynthesis. Component of the microsomal membrane bound fatty acid elongation system, which produces the 26-carbon very long-chain fatty acids (VLCFA) from palmitate. Catalyzes the reduction of the 3-ketoacyl-CoA intermediate that is formed in each cycle of fatty acid elongation. VLCFAs serve as precursors for ceramide and sphingolipids. The polypeptide is Very-long-chain 3-oxoacyl-CoA reductase (Podospora anserina (strain S / ATCC MYA-4624 / DSM 980 / FGSC 10383) (Pleurage anserina)).